The primary structure comprises 249 residues: Small ribosomal subunit protein eS6 (249 aa).

Residues 216 to 229 (RMKEAKEKRQEQIA) show a composition bias toward basic and acidic residues. A disordered region spans residues 216 to 249 (RMKEAKEKRQEQIAKRRRLSSLRASTSKSESSQK). Phosphoserine is present on residues serine 235, serine 236, serine 240, serine 244, and serine 247. Over residues 236–249 (SLRASTSKSESSQK) the composition is skewed to low complexity.

This sequence belongs to the eukaryotic ribosomal protein eS6 family. Component of the small ribosomal subunit. Post-translationally, ribosomal protein S6 is the major substrate of protein kinases in eukaryote ribosomes. The phosphorylation is stimulated by growth factors, tumor promoting agents, and mitogens. It is dephosphorylated at growth arrest.

It is found in the cytoplasm. Component of the 40S small ribosomal subunit. Plays an important role in controlling cell growth and proliferation through the selective translation of particular classes of mRNA. This Oncorhynchus mykiss (Rainbow trout) protein is Small ribosomal subunit protein eS6 (rps6).